The chain runs to 162 residues: Crossover junction endodeoxyribonuclease RuvC (162 aa).

Active-site residues include aspartate 8, glutamate 69, and histidine 141. Mg(2+)-binding residues include aspartate 8, glutamate 69, and histidine 141.

It belongs to the RuvC family. Homodimer which binds Holliday junction (HJ) DNA. The HJ becomes 2-fold symmetrical on binding to RuvC with unstacked arms; it has a different conformation from HJ DNA in complex with RuvA. In the full resolvosome a probable DNA-RuvA(4)-RuvB(12)-RuvC(2) complex forms which resolves the HJ. Mg(2+) serves as cofactor.

It is found in the cytoplasm. The catalysed reaction is Endonucleolytic cleavage at a junction such as a reciprocal single-stranded crossover between two homologous DNA duplexes (Holliday junction).. In terms of biological role, the RuvA-RuvB-RuvC complex processes Holliday junction (HJ) DNA during genetic recombination and DNA repair. Endonuclease that resolves HJ intermediates. Cleaves cruciform DNA by making single-stranded nicks across the HJ at symmetrical positions within the homologous arms, yielding a 5'-phosphate and a 3'-hydroxyl group; requires a central core of homology in the junction. The consensus cleavage sequence is 5'-(A/T)TT(C/G)-3'. Cleavage occurs on the 3'-side of the TT dinucleotide at the point of strand exchange. HJ branch migration catalyzed by RuvA-RuvB allows RuvC to scan DNA until it finds its consensus sequence, where it cleaves and resolves the cruciform DNA. This chain is Crossover junction endodeoxyribonuclease RuvC, found in Wolbachia sp. subsp. Drosophila simulans (strain wRi).